The chain runs to 215 residues: Large ribosomal subunit protein uL4 (215 aa).

A disordered region spans residues 46–72 (TAKSKNRAEVSGGGRKPWAQKGGGRAR). The span at 56 to 71 (SGGGRKPWAQKGGGRA) shows a compositional bias: gly residues.

This sequence belongs to the universal ribosomal protein uL4 family. Part of the 50S ribosomal subunit.

Functionally, one of the primary rRNA binding proteins, this protein initially binds near the 5'-end of the 23S rRNA. It is important during the early stages of 50S assembly. It makes multiple contacts with different domains of the 23S rRNA in the assembled 50S subunit and ribosome. In terms of biological role, forms part of the polypeptide exit tunnel. The chain is Large ribosomal subunit protein uL4 from Helicobacter pylori (strain Shi470).